A 1067-amino-acid polypeptide reads, in one-letter code: DNA-directed RNA polymerase subunit beta (1067 aa).

The protein belongs to the RNA polymerase beta chain family. In plastids the minimal PEP RNA polymerase catalytic core is composed of four subunits: alpha, beta, beta', and beta''. When a (nuclear-encoded) sigma factor is associated with the core the holoenzyme is formed, which can initiate transcription.

The protein localises to the plastid. It is found in the chloroplast. The enzyme catalyses RNA(n) + a ribonucleoside 5'-triphosphate = RNA(n+1) + diphosphate. DNA-dependent RNA polymerase catalyzes the transcription of DNA into RNA using the four ribonucleoside triphosphates as substrates. This is DNA-directed RNA polymerase subunit beta from Ipomoea purpurea (Common morning glory).